A 199-amino-acid polypeptide reads, in one-letter code: Imidazoleglycerol-phosphate dehydratase (199 aa).

This sequence belongs to the imidazoleglycerol-phosphate dehydratase family.

It is found in the cytoplasm. The enzyme catalyses D-erythro-1-(imidazol-4-yl)glycerol 3-phosphate = 3-(imidazol-4-yl)-2-oxopropyl phosphate + H2O. The protein operates within amino-acid biosynthesis; L-histidine biosynthesis; L-histidine from 5-phospho-alpha-D-ribose 1-diphosphate: step 6/9. In Rhodospirillum rubrum (strain ATCC 11170 / ATH 1.1.1 / DSM 467 / LMG 4362 / NCIMB 8255 / S1), this protein is Imidazoleglycerol-phosphate dehydratase.